Here is a 100-residue protein sequence, read N- to C-terminus: EKC/KEOPS complex subunit GON7 (100 aa).

Met1 bears the N-acetylmethionine mark. Residues 50 to 100 (SPVQGEAQDRVAAAPEEALDGDDEDDAEDENNIDNRTNSDGPTAKRPKPPS) form a disordered region. Over residues 66–81 (EALDGDDEDDAEDENN) the composition is skewed to acidic residues.

Component of the EKC/KEOPS complex composed of at least GON7, TP53RK, TPRKB, OSGEP and LAGE3; the whole complex dimerizes.

It is found in the nucleus. Component of the EKC/KEOPS complex that is required for the formation of a threonylcarbamoyl group on adenosine at position 37 (t(6)A37) in tRNAs that read codons beginning with adenine. The complex is probably involved in the transfer of the threonylcarbamoyl moiety of threonylcarbamoyl-AMP (TC-AMP) to the N6 group of A37. GON7 plays a supporting role to the catalytic subunit OSGEP in the complex. This is EKC/KEOPS complex subunit GON7 from Sus scrofa (Pig).